The sequence spans 94 residues: Integration host factor subunit beta (94 aa).

The protein belongs to the bacterial histone-like protein family. As to quaternary structure, heterodimer of an alpha and a beta chain.

In terms of biological role, this protein is one of the two subunits of integration host factor, a specific DNA-binding protein that functions in genetic recombination as well as in transcriptional and translational control. This is Integration host factor subunit beta from Brucella abortus (strain S19).